The following is a 118-amino-acid chain: Peptidyl-prolyl cis-trans isomerase Pin1 (118 aa).

2 disordered regions span residues 1–37 and 61–84; these read MSSE…ATTR and LASR…GRGQ. Positions 3–118 constitute a PpiC domain; that stretch reads SEKVRASHIL…SGVHIIKRTG (116 aa). Positions 12 to 22 are enriched in basic residues; it reads LIKHQGSRRKS.

It belongs to the PpiC/parvulin rotamase family. In terms of processing, the N-terminus is blocked. As to expression, expressed in roots, stems, leaves, flowers and seedlings.

It localises to the cytoplasm. The protein localises to the nucleus. The enzyme catalyses [protein]-peptidylproline (omega=180) = [protein]-peptidylproline (omega=0). With respect to regulation, inhibited in vitro by juglone. Prolyl cis/trans isomerase with specificity for phospho-Ser-Pro bonds. The chain is Peptidyl-prolyl cis-trans isomerase Pin1 (PARV12.8) from Digitalis lanata (Grecian foxglove).